Reading from the N-terminus, the 282-residue chain is S-formylglutathione hydrolase (282 aa).

K4 is modified (N6-succinyllysine). S149 functions as the Charge relay system in the catalytic mechanism. K200 carries the post-translational modification N6-acetyllysine. Catalysis depends on charge relay system residues D226 and H260.

This sequence belongs to the esterase D family. Homodimer.

The protein localises to the cytoplasm. The protein resides in the cytoplasmic vesicle. It carries out the reaction S-formylglutathione + H2O = formate + glutathione + H(+). Functionally, serine hydrolase involved in the detoxification of formaldehyde. This is S-formylglutathione hydrolase (Esd) from Rattus norvegicus (Rat).